The chain runs to 245 residues: Cuticle protein (245 aa).

Residues 25–86 (VSYAAAPALV…TGDSKSQQES (62 aa)) enclose the Chitin-binding type R&amp;R domain. Positions 79–100 (DSKSQQESRSGDVVQGSYSVVD) are disordered. 3 consecutive repeat copies span residues 92 to 95 (VQGS), 108 to 111 (VDYT), and 118 to 121 (FNAV).

Functionally, component of the cuticle of African malaria mosquito. This Anopheles gambiae (African malaria mosquito) protein is Cuticle protein (Ccp84Ab).